Reading from the N-terminus, the 716-residue chain is Exocyst complex component 8 (716 aa).

Serine 15 is modified (phosphoserine). The disordered stretch occupies residues 129-150 (GFLPGPAGVPREGSGTGEEGKQ). Residues 173–273 (YLVYNGDLVE…WLEVLEETKR (101 aa)) form the PH domain. The span at 275–284 (LSDKRRREQE) shows a compositional bias: basic and acidic residues. Positions 275-319 (LSDKRRREQEEAAAPRAPPPVTSKGSNPFEDEDDEELATPEAEEE) are disordered. The segment covering 303–319 (FEDEDDEELATPEAEEE) has biased composition (acidic residues). Position 313 is a phosphothreonine (threonine 313).

The protein belongs to the EXO84 family. As to quaternary structure, the exocyst complex is composed of EXOC1, EXOC2, EXOC3, EXOC4, EXOC5, EXOC6, EXOC7 and EXOC8. Interacts (via PH domain) with GTP-bound RALA and RALB. Interacts with SH3BP1; required for the localization of both SH3BP1 and the exocyst to the leading edge of migrating cells.

The protein resides in the cytoplasm. It is found in the perinuclear region. It localises to the cell projection. Its subcellular location is the growth cone. Its function is as follows. Component of the exocyst complex involved in the docking of exocytic vesicles with fusion sites on the plasma membrane. The protein is Exocyst complex component 8 (Exoc8) of Mus musculus (Mouse).